A 103-amino-acid polypeptide reads, in one-letter code: N(4)-acetylcytidine amidohydrolase (103 aa).

The 89-residue stretch at I6–Q94 folds into the ASCH domain. The Proton acceptor role is filled by K21. T24 serves as the catalytic Nucleophile. E74 serves as the catalytic Proton donor.

Belongs to the N(4)-acetylcytidine amidohydrolase family.

It catalyses the reaction N(4)-acetylcytidine + H2O = cytidine + acetate + H(+). It carries out the reaction N(4)-acetyl-2'-deoxycytidine + H2O = 2'-deoxycytidine + acetate + H(+). The catalysed reaction is N(4)-acetylcytosine + H2O = cytosine + acetate + H(+). Functionally, catalyzes the hydrolysis of N(4)-acetylcytidine (ac4C). The protein is N(4)-acetylcytidine amidohydrolase of Citrobacter koseri (strain ATCC BAA-895 / CDC 4225-83 / SGSC4696).